The chain runs to 126 residues: MDEQRDTTDRFLPRFDAAGLVTAIVVDADTQALLMVAHMNADAIEATRATGQAHFWSRSRSALWRKGETSGNGLTLVEMRVDCDQDALLLRVKPAGPACHTGRRSCFYRRVEADGGLTFLADDAQG.

Aspartate 82 contacts Mg(2+). Zn(2+) is bound at residue cysteine 83. Residues aspartate 84 and aspartate 86 each contribute to the Mg(2+) site. Residues cysteine 99 and cysteine 106 each contribute to the Zn(2+) site.

It belongs to the PRA-CH family. As to quaternary structure, homodimer. Mg(2+) serves as cofactor. Zn(2+) is required as a cofactor.

The protein localises to the cytoplasm. It carries out the reaction 1-(5-phospho-beta-D-ribosyl)-5'-AMP + H2O = 1-(5-phospho-beta-D-ribosyl)-5-[(5-phospho-beta-D-ribosylamino)methylideneamino]imidazole-4-carboxamide. The protein operates within amino-acid biosynthesis; L-histidine biosynthesis; L-histidine from 5-phospho-alpha-D-ribose 1-diphosphate: step 3/9. Its function is as follows. Catalyzes the hydrolysis of the adenine ring of phosphoribosyl-AMP. The polypeptide is Phosphoribosyl-AMP cyclohydrolase (Sphingopyxis alaskensis (strain DSM 13593 / LMG 18877 / RB2256) (Sphingomonas alaskensis)).